A 424-amino-acid polypeptide reads, in one-letter code: MLDIKFLRTNFEEVKAKLQHRGEDLTDFGRFEELDTRRRELLVQTEELKSKRNEVSQQISVLKREKKDAESLILEMREVGEKVKDLDNELRTVEEDLERLMLSIPNIPHESAPVGETEDDNVVARTWGEVKEFAFEPKPHWDLATDLGILDFERAGKVTGSRFVFYKGAGARLERALISFMLDLHTDEHGYEEVLPPYMVNRASMTGTGQLPKFEEDAFRIESEDYFLIPTAEVPVTNMHRDEILNKEQLPIRYAAFSSCFRSEAGSAGRDTRGLIRQHQFNKVELVKFVKPEDSYEELEKLXNDAERVLQLLELPYRVMSMCTGDLGFTAAKKYDIEVWIPSYGTYREISSCSNFEAFQARRANIRFRREPNGKPEHVHTLNGSGLAIGRTVAAILENYQQEDGTIIIPEVLRPYMGGKTVIK.

An L-serine-binding site is contributed by 231 to 233 (TAE). Residue 262–264 (RSE) coordinates ATP. E285 is an L-serine binding site. 349–352 (EISS) serves as a coordination point for ATP. S385 lines the L-serine pocket.

Belongs to the class-II aminoacyl-tRNA synthetase family. Type-1 seryl-tRNA synthetase subfamily. As to quaternary structure, homodimer. The tRNA molecule binds across the dimer.

It is found in the cytoplasm. The catalysed reaction is tRNA(Ser) + L-serine + ATP = L-seryl-tRNA(Ser) + AMP + diphosphate + H(+). It carries out the reaction tRNA(Sec) + L-serine + ATP = L-seryl-tRNA(Sec) + AMP + diphosphate + H(+). Its pathway is aminoacyl-tRNA biosynthesis; selenocysteinyl-tRNA(Sec) biosynthesis; L-seryl-tRNA(Sec) from L-serine and tRNA(Sec): step 1/1. Functionally, catalyzes the attachment of serine to tRNA(Ser). Is also able to aminoacylate tRNA(Sec) with serine, to form the misacylated tRNA L-seryl-tRNA(Sec), which will be further converted into selenocysteinyl-tRNA(Sec). The polypeptide is Serine--tRNA ligase (Bacillus cereus (strain ATCC 10987 / NRS 248)).